The primary structure comprises 207 residues: Small ribosomal subunit protein uS4 (207 aa).

The S4 RNA-binding domain maps to 97–159 (SRLDNVCYRM…AKSQLRIQAA (63 aa)).

It belongs to the universal ribosomal protein uS4 family. As to quaternary structure, part of the 30S ribosomal subunit. Contacts protein S5. The interaction surface between S4 and S5 is involved in control of translational fidelity.

In terms of biological role, one of the primary rRNA binding proteins, it binds directly to 16S rRNA where it nucleates assembly of the body of the 30S subunit. With S5 and S12 plays an important role in translational accuracy. The protein is Small ribosomal subunit protein uS4 of Halorhodospira halophila (strain DSM 244 / SL1) (Ectothiorhodospira halophila (strain DSM 244 / SL1)).